A 528-amino-acid chain; its full sequence is Lysine--tRNA ligase (528 aa).

A 'HIGH' region motif is present at residues 36–44 (PSGTVHIGN). The 'KMSKS' region motif lies at 287–291 (KMSSS).

Belongs to the class-I aminoacyl-tRNA synthetase family.

Its subcellular location is the cytoplasm. The enzyme catalyses tRNA(Lys) + L-lysine + ATP = L-lysyl-tRNA(Lys) + AMP + diphosphate. In Treponema pallidum (strain Nichols), this protein is Lysine--tRNA ligase (lysS).